The chain runs to 392 residues: Phosphoglycerate kinase (392 aa).

Residues 21-23, Arg-36, 59-62, Arg-114, and Arg-147 contribute to the substrate site; these read DMN and HLGR. ATP contacts are provided by residues Lys-198, Glu-320, and 346-349; that span reads GGDT.

Belongs to the phosphoglycerate kinase family. In terms of assembly, monomer.

The protein localises to the cytoplasm. It carries out the reaction (2R)-3-phosphoglycerate + ATP = (2R)-3-phospho-glyceroyl phosphate + ADP. The protein operates within carbohydrate degradation; glycolysis; pyruvate from D-glyceraldehyde 3-phosphate: step 2/5. The protein is Phosphoglycerate kinase of Neisseria meningitidis serogroup C (strain 053442).